The sequence spans 164 residues: Phosphopantetheine adenylyltransferase (164 aa).

Position 10 (S10) interacts with substrate. ATP is bound by residues S10–F11 and H18. The substrate site is built by K42, T79, and R93. Residues G94–R96, E104, and V129–S135 contribute to the ATP site.

This sequence belongs to the bacterial CoaD family. Homohexamer. Mg(2+) serves as cofactor.

It localises to the cytoplasm. It catalyses the reaction (R)-4'-phosphopantetheine + ATP + H(+) = 3'-dephospho-CoA + diphosphate. It participates in cofactor biosynthesis; coenzyme A biosynthesis; CoA from (R)-pantothenate: step 4/5. Functionally, reversibly transfers an adenylyl group from ATP to 4'-phosphopantetheine, yielding dephospho-CoA (dPCoA) and pyrophosphate. This Bradyrhizobium sp. (strain ORS 278) protein is Phosphopantetheine adenylyltransferase.